Here is a 1494-residue protein sequence, read N- to C-terminus: B-cell CLL/lymphoma 9-like protein (1494 aa).

2 disordered regions span residues 1–236 (MRIL…PPSQ) and 269–496 (VPRA…DMGQ). Over residues 20–37 (GSPPLSPRGHCPPAPAKP) the composition is skewed to pro residues. A phosphoserine mark is found at S21 and S25. K36 carries the N6-acetyllysine modification. Polar residues-rich tracts occupy residues 45–70 (TNHGKTGNGGAQSQHQNVNQGPTCNL) and 85–96 (NQISPSNSSLKN). Residue S88 is modified to Phosphoserine. 2 positions are modified to N6-acetyllysine: K108 and K110. Composition is skewed to basic and acidic residues over residues 114-126 (ERSVSVDSGEQRE) and 134-153 (SEAKEVAPRSKRRCVLERKQ). Residues S116 and S118 each carry the phosphoserine modification. An N6-acetyllysine modification is found at K137. Residues 193–207 (PGQTAQLPLSESSAP) show a composition bias toward polar residues. Pro residues-rich tracts occupy residues 279 to 289 (KVPPTPEPLPL) and 299 to 322 (SQPPPLPPPPPAPGSAPPALPPEG). Residues 302–530 (PPLPPPPPAP…QEEYYEEKRR (229 aa)) form a necessary for interaction with CTNNB1 region. A compositionally biased stretch (low complexity) spans 348–360 (THPNTPTAATANN). Residues 396-418 (LSKEQLEHRERSLQTLRDIERLL) show a composition bias toward basic and acidic residues. S421 is modified (phosphoserine). Position 511 is a phosphothreonine (T511). Asymmetric dimethylarginine is present on R677. Residues S747, S810, S912, S923, S935, S939, S944, S972, S984, S988, S994, S1001, S1007, and S1014 each carry the phosphoserine modification. Disordered regions lie at residues 905-1082 (RGLG…NPLS) and 1113-1206 (ELLP…PGGP). Positions 932 to 957 (PTLSQVHSPLVTSPSANLKSPQTPSQ) are enriched in polar residues. The span at 974–993 (QVLSSSLGVRSPTGSPSRLK) shows a compositional bias: polar residues. Polar residues predominate over residues 1016-1035 (GVSQNKQPPLSINSSSTLGN). Over residues 1046–1059 (PRNSSSAPPANPSS) the composition is skewed to low complexity. A compositionally biased stretch (polar residues) spans 1060–1082 (GLMNPSLPFTSSPDPTPSQNPLS). Positions 1119 to 1129 (PLLPPPPPPQG) are enriched in pro residues. Residues 1133–1143 (GISNNQPNQMH) show a composition bias toward polar residues. Residues 1165–1176 (HEPPPTMLPSPT) are compositionally biased toward pro residues. K1339 is covalently cross-linked (Glycyl lysine isopeptide (Lys-Gly) (interchain with G-Cter in SUMO2)).

It belongs to the BCL9 family. Found in a complex with CDC73; CTNNB1 and PYGO1. Interacts with CTNNB1. Expressed in kidney, liver, lung, testis, brain, spleen, heart and skeletal muscle. Highly expressed in numerous colorectal tumors compared to corresponding non-cancerous tissues.

The protein localises to the nucleus. Functionally, transcriptional regulator that acts as an activator. Promotes beta-catenin transcriptional activity. Plays a role in tumorigenesis. Enhances the neoplastic transforming activity of CTNNB1. In Mus musculus (Mouse), this protein is B-cell CLL/lymphoma 9-like protein (Bcl9l).